The chain runs to 510 residues: NAD(P)H-quinone oxidoreductase subunit 2, chloroplastic (510 aa).

A run of 12 helical transmembrane segments spans residues Leu24–Leu44, Trp59–Trp79, Ile99–Ile119, Met124–Cys144, Phe149–Tyr169, Tyr183–Gly203, Ile229–Phe249, Trp295–Ile315, Met323–Asp343, Gly347–Ala367, Ala395–Phe415, and Leu418–Leu438.

This sequence belongs to the complex I subunit 2 family. As to quaternary structure, NDH is composed of at least 16 different subunits, 5 of which are encoded in the nucleus.

It is found in the plastid. The protein localises to the chloroplast thylakoid membrane. It carries out the reaction a plastoquinone + NADH + (n+1) H(+)(in) = a plastoquinol + NAD(+) + n H(+)(out). The catalysed reaction is a plastoquinone + NADPH + (n+1) H(+)(in) = a plastoquinol + NADP(+) + n H(+)(out). Functionally, NDH shuttles electrons from NAD(P)H:plastoquinone, via FMN and iron-sulfur (Fe-S) centers, to quinones in the photosynthetic chain and possibly in a chloroplast respiratory chain. The immediate electron acceptor for the enzyme in this species is believed to be plastoquinone. Couples the redox reaction to proton translocation, and thus conserves the redox energy in a proton gradient. This chain is NAD(P)H-quinone oxidoreductase subunit 2, chloroplastic, found in Phormium tenax (New Zealand flax).